A 599-amino-acid chain; its full sequence is Probable acetolactate synthase large subunit (599 aa).

E47 is a binding site for thiamine diphosphate. Residues R149, 258 to 279 (HGTKPANYCLSESDVLISIGCR), and 301 to 320 (DIDPAEIGKNVNVDVPIVGD) each bind FAD. The tract at residues 404–484 (QNQMWMAHYF…VVICIFDNRT (81 aa)) is thiamine pyrophosphate binding. The Mg(2+) site is built by D455 and N482.

It belongs to the TPP enzyme family. As to quaternary structure, dimer of large and small chains. Mg(2+) is required as a cofactor. Thiamine diphosphate serves as cofactor.

The enzyme catalyses 2 pyruvate + H(+) = (2S)-2-acetolactate + CO2. Its pathway is amino-acid biosynthesis; L-isoleucine biosynthesis; L-isoleucine from 2-oxobutanoate: step 1/4. The protein operates within amino-acid biosynthesis; L-valine biosynthesis; L-valine from pyruvate: step 1/4. This Methanococcus aeolicus protein is Probable acetolactate synthase large subunit (ilvB).